Here is a 4599-residue protein sequence, read N- to C-terminus: Low-density lipoprotein receptor-related protein 1B (4599 aa).

A signal peptide spans 1 to 20 (MSEFLLALLTLSGLLPIARV). The Extracellular portion of the chain corresponds to 25–4444 (ADRDQQLCDP…KSDHISTRSI (4420 aa)). 2 LDL-receptor class A domains span residues 31–70 (LCDPGEFLCHDHVTCVSQSWLCDGDPDCPDDSDESLDTCP) and 76–114 (KCPLNHIACLGTNKCVHLSQLCNGVLDCPDGYDEGVHCQ). 12 disulfide bridges follow: Cys-32–Cys-45, Cys-39–Cys-58, Cys-52–Cys-69, Cys-77–Cys-90, Cys-84–Cys-103, Cys-97–Cys-113, Cys-120–Cys-129, Cys-125–Cys-138, Cys-140–Cys-153, Cys-159–Cys-169, Cys-165–Cys-178, and Cys-180–Cys-193. The EGF-like 1 domain maps to 116–154 (LLSNCQQLNCQYKCTMVRNSTRCYCEDGFEITEDGRSCK). Asn-134 carries an N-linked (GlcNAc...) asparagine glycan. Residues 155–194 (DQDECAVYGTCSQTCRNTHGSYTCSCVEGYLMQPDNRSCK) form the EGF-like 2; calcium-binding domain. Asn-190, Asn-220, Asn-313, and Asn-360 each carry an N-linked (GlcNAc...) asparagine glycan. LDL-receptor class B repeat units lie at residues 295–337 (RNLY…DPIA), 338–381 (GKLF…DLVN), and 382–425 (KLVY…FEDY). The N-linked (GlcNAc...) asparagine glycan is linked to Asn-443. An EGF-like 3 domain is found at 471–517 (RSHACEVDPYGMPGGCSHICLLSSSYKTRTCRCRTGFNLGSDGRSCK). LDL-receptor class B repeat units lie at residues 568–610 (NYIY…DWIG), 611–656 (NNLY…DPVN), 657–706 (GWMY…DFHT), and 707–750 (NTLY…HGNY). N-linked (GlcNAc...) asparagine glycans are attached at residues Asn-725 and Asn-758. Residues 794 to 834 (GDNMCRVNNGGCSTLCLAIPGGRVCACADNQLLDENGTTCT) form the EGF-like 4 domain. Disulfide bonds link Cys-798–Cys-809, Cys-805–Cys-818, Cys-820–Cys-833, Cys-845–Cys-857, Cys-852–Cys-870, and Cys-864–Cys-881. N-linked (GlcNAc...) asparagine glycosylation occurs at Asn-829. The LDL-receptor class A 3 domain occupies 844–882 (ICKAGEFRCKNRHCIQARWKCDGDDDCLDGSDEDSVNCF). Asn-883 is a glycosylation site (N-linked (GlcNAc...) asparagine). LDL-receptor class A domains are found at residues 885-923 (SCPDDQFKCQNNRCIPKRWLCDGANDCGSNEDESNQTCT), 926-963 (TCQVDQFSCGNGRCIPRAWLCDREDDCGDQTDEMASCE), 966-1003 (TCEPLTQFVCKSGRCISSKWHCDSDDDCGDGSDEVGCV), 1005-1043 (SCFDNQFRCSSGRCIPGHWACDGDNDCGDFSDEAQINCT), 1052-1089 (GCNGNEFQCHPDGNCVPDLWRCDGEKDCEDGSDEKGCN), 1094-1132 (LCDHKTKFSCWSTGRCINKAWVCDGDIDCEDQSDEDDCD), and 1135-1174 (LCGPPKHPCANDTSVCLQPEKLCNGKKDCPDGSDEGYLCD). 15 cysteine pairs are disulfide-bonded: Cys-886/Cys-898, Cys-893/Cys-911, Cys-905/Cys-922, Cys-927/Cys-939, Cys-934/Cys-952, Cys-946/Cys-962, Cys-967/Cys-980, Cys-975/Cys-993, Cys-987/Cys-1002, Cys-1006/Cys-1018, Cys-1013/Cys-1031, Cys-1025/Cys-1042, Cys-1053/Cys-1066, Cys-1060/Cys-1079, and Cys-1073/Cys-1088. Residue Asn-919 is glycosylated (N-linked (GlcNAc...) asparagine). N-linked (GlcNAc...) asparagine glycosylation occurs at Asn-1041. N-linked (GlcNAc...) asparagine glycosylation occurs at Asn-1089. 6 cysteine pairs are disulfide-bonded: Cys-1095-Cys-1109, Cys-1103-Cys-1122, Cys-1116-Cys-1131, Cys-1136-Cys-1150, Cys-1143-Cys-1163, and Cys-1157-Cys-1173. The N-linked (GlcNAc...) asparagine glycan is linked to Asn-1145. EGF-like domains follow at residues 1174–1213 (DECSLNNGGCSNHCSVVPGRGIVCSCPEGLQLNKDNKTCE) and 1214–1253 (IVDYCSNHLKCSQVCEQHKHTVKCSCYEGWKLDVDGESCT). Asn-1209 carries N-linked (GlcNAc...) asparagine glycosylation. The N-linked (GlcNAc...) asparagine glycan is linked to Asn-1298. LDL-receptor class B repeat units follow at residues 1300 to 1346 (SLLY…DWIA), 1347 to 1389 (GNIY…DPRY), 1390 to 1436 (GILF…DHFE), 1437 to 1480 (KRIV…LYGS), and 1481 to 1522 (EVYW…YHPS). Residues Asn-1502, Asn-1549, and Asn-1636 are each glycosylated (N-linked (GlcNAc...) asparagine). The EGF-like 7 domain maps to 1527–1570 (APNPCAANDGKGPCSHMCLINHNRSAACACPHLMKLSSDKKTCY). LDL-receptor class B repeat units follow at residues 1618-1660 (ERLY…DWVS), 1661-1704 (RNLY…HPVR), 1705-1744 (GKLYWTDGNTINMANMDGSNSKILFQNQKEPVGLSIDYVE), and 1745-1787 (NKLY…TIMD). Asn-1754 and Asn-1816 each carry an N-linked (GlcNAc...) asparagine glycan. Residues 1834–1875 (GSNSCQLNNGGCSQLCLPTSETTRTCMCTVGYYLQKNRMSCQ) form the EGF-like 8 domain. 3 disulfides stabilise this stretch: Cys-1838–Cys-1849, Cys-1845–Cys-1859, and Cys-1861–Cys-1874. An N-linked (GlcNAc...) asparagine glycan is attached at Asn-1921. LDL-receptor class B repeat units follow at residues 1922-1964 (DTIY…DWIA), 1965-2007 (GNIY…HPEK), 2008-2051 (GLLF…DYEE), and 2052-2095 (NKLY…FGAY). N-linked (GlcNAc...) asparagine glycosylation is present at Asn-1983. The N-linked (GlcNAc...) asparagine glycan is linked to Asn-2105. Residues 2143–2183 (GTNVCARDNGGCKQLCLYRGNSRRTCACAHGYLAEDGVTCL) form the EGF-like 9 domain. 3 cysteine pairs are disulfide-bonded: Cys-2147–Cys-2158, Cys-2154–Cys-2168, and Cys-2170–Cys-2182. LDL-receptor class B repeat units lie at residues 2239–2280 (NRIF…HRAW), 2281–2329 (DTLY…DECQ), 2330–2374 (NLMF…DYRA), 2375–2416 (EKLY…VYDN), and 2417–2459 (YIFW…VAND). Residues Asn-2458, Asn-2488, and Asn-2507 are each glycosylated (N-linked (GlcNAc...) asparagine). One can recognise an EGF-like 10 domain in the interval 2464–2504 (ELSPCALLNGGCHDLCLLTPNGRVNCSCRGDRILLEDNRCV). The 40-residue stretch at 2509 to 2548 (SCNAYSEFECGNGECIDYQLTCDGIPHCKDKSDEKLLYCE) folds into the LDL-receptor class A 11 domain. Intrachain disulfides connect Cys-2510-Cys-2523, Cys-2518-Cys-2536, and Cys-2530-Cys-2547. The N-linked (GlcNAc...) asparagine glycan is linked to Asn-2549. LDL-receptor class A domains lie at 2551–2587 (SCRRGFKPCYNRRCIPHGKLCDGENDCGDNSDELDCK), 2590–2626 (TCATVEFRCADGTCIPRSARCNQNIDCADASDEKNCN), 2629–2675 (DCTH…LKCP), 2681–2717 (KCEENYFSCPSGRCILNTWICDGQKDCEDGRDEFHCD), 2719–2757 (SCSWNQFACSAQKCISKHWICDGEDDCGDGLDESDSICG), and 2760–2800 (TCAA…AGCA). Cystine bridges form between Cys-2552-Cys-2564, Cys-2559-Cys-2577, Cys-2571-Cys-2586, Cys-2591-Cys-2603, Cys-2598-Cys-2616, and Cys-2610-Cys-2625. Asn-2626 and Asn-2647 each carry an N-linked (GlcNAc...) asparagine glycan. 12 disulfide bridges follow: Cys-2630-Cys-2652, Cys-2646-Cys-2665, Cys-2659-Cys-2674, Cys-2682-Cys-2694, Cys-2689-Cys-2707, Cys-2701-Cys-2716, Cys-2720-Cys-2732, Cys-2727-Cys-2745, Cys-2739-Cys-2756, Cys-2761-Cys-2774, Cys-2768-Cys-2787, and Cys-2781-Cys-2799. An N-linked (GlcNAc...) asparagine glycan is attached at Asn-2802. LDL-receptor class A domains follow at residues 2804–2841 (TCDENAFMCHNKVCIPKQFVCDHDDDCGDGSDESPQCG), 2844–2885 (QCGT…PKCK), and 2890–2926 (SCNSSFFMCKNGRCIPSGGLCDNKDDCGDGSDERNCH). Intrachain disulfides connect Cys-2805/Cys-2817, Cys-2812/Cys-2830, Cys-2824/Cys-2840, Cys-2845/Cys-2857, Cys-2852/Cys-2871, Cys-2865/Cys-2884, Cys-2891/Cys-2903, Cys-2898/Cys-2916, Cys-2910/Cys-2925, Cys-2930/Cys-2942, Cys-2938/Cys-2951, Cys-2953/Cys-2966, Cys-2972/Cys-2982, Cys-2978/Cys-2991, and Cys-2993/Cys-3007. Asn-2892 carries N-linked (GlcNAc...) asparagine glycosylation. In terms of domain architecture, EGF-like 11 spans 2927–2967 (INECLSKKVSGCSQDCQDLPVSYKCKCWPGFQLKDDGKTCV). Residues 2968–3008 (DIDECSSGFPCSQQCINTYGTYKCLCTDGYEIQPDNPNGCK) enclose the EGF-like 12; calcium-binding domain. Residues Asn-3034, Asn-3066, and Asn-3076 are each glycosylated (N-linked (GlcNAc...) asparagine). 5 LDL-receptor class B repeats span residues 3055–3098 (EFIY…DWIG), 3099–3141 (KNLY…DPQA), 3142–3185 (GYLY…DYVN), 3186–3224 (RRLYWADENHIEFSNMDGSHRHKVPNQDIPGVIALTLFE), and 3225–3268 (DYIY…HSYR). A glycan (N-linked (GlcNAc...) asparagine) is linked at Asn-3164. In terms of domain architecture, EGF-like 13 spans 3273–3314 (SKHLCMINNGGCSHLCLLAPGKTHTCACPTNFYLAADNRTCL). Residues Asn-3310 and Asn-3316 are each glycosylated (N-linked (GlcNAc...) asparagine). LDL-receptor class A domains are found at residues 3316 to 3353 (NCTASQFRCKTDKCIPFWWKCDTVDDCGDGSDEPDDCP), 3356 to 3392 (RCQPGRFQCGTGLCALPAFICDGENDCGDNSDELNCD), 3395 to 3432 (VCLSGQFKCTKNQKCIPVNLRCNGQDDCGDEEDERDCP), 3435 to 3472 (SCSPDYFQCKTTKHCISKLWVCDEDPDCADASDEANCD), 3475 to 3511 (TCGPHEFQCKNNNCIPDHWRCDSQNDCSDNSDEENCK), 3514 to 3550 (TCTLKDFLCANGDCVSSRFWCDGDFDCADGSDERNCE), 3552 to 3588 (SCSKDQFRCSNGQCIPAKWKCDGHEDCKYGEDEKSCE), 3593 to 3629 (TCSSREYICASDGCISASLKCNGEYDCADGSDEMDCV), 3631 to 3668 (ECKEDQFRCKNKAHCIPIRWLCDGIHDCVDGSDEENCE), 3673 to 3711 (ICRADEFLCNNSLCKLHFWVCDGEDDCGDNSDEAPDMCV), 3714 to 3752 (LCPSTRPHRCRNNRICLQSEQMCNGIDECGDNSDEDHCG), and 3761 to 3797 (PCKKDEFACSNKKCIPMDLQCDRLDDCGDGSDEQGCR). 42 disulfide bridges follow: Cys-3317–Cys-3329, Cys-3324–Cys-3342, Cys-3336–Cys-3352, Cys-3357–Cys-3369, Cys-3364–Cys-3382, Cys-3376–Cys-3391, Cys-3396–Cys-3409, Cys-3403–Cys-3422, Cys-3416–Cys-3431, Cys-3436–Cys-3449, Cys-3443–Cys-3462, Cys-3456–Cys-3471, Cys-3476–Cys-3488, Cys-3483–Cys-3501, Cys-3495–Cys-3510, Cys-3515–Cys-3527, Cys-3522–Cys-3540, Cys-3534–Cys-3549, Cys-3553–Cys-3565, Cys-3560–Cys-3578, Cys-3572–Cys-3587, Cys-3594–Cys-3606, Cys-3601–Cys-3619, Cys-3613–Cys-3628, Cys-3632–Cys-3645, Cys-3639–Cys-3658, Cys-3652–Cys-3667, Cys-3674–Cys-3686, Cys-3681–Cys-3699, Cys-3693–Cys-3710, Cys-3715–Cys-3729, Cys-3723–Cys-3742, Cys-3736–Cys-3751, Cys-3762–Cys-3774, Cys-3769–Cys-3787, Cys-3781–Cys-3796, Cys-3805–Cys-3818, Cys-3812–Cys-3827, Cys-3829–Cys-3842, Cys-3848–Cys-3858, Cys-3854–Cys-3867, and Cys-3869–Cys-3880. A glycan (N-linked (GlcNAc...) asparagine) is linked at Asn-3682. 2 EGF-like domains span residues 3801–3843 (TEYT…RQCE) and 3844–3881 (DLNECLVFGTCSHQCINVEGSYKCVCDQNFQERNNTCI). N-linked (GlcNAc...) asparagine glycans are attached at residues Asn-3877, Asn-3894, and Asn-3906. 4 LDL-receptor class B repeats span residues 3933 to 3980 (DMII…DWVA), 3981 to 4038 (GNIY…NPKR), 4039 to 4082 (GMMY…DYFS), and 4083 to 4127 (ERIY…FEDY). Asn-4017 is a glycosylation site (N-linked (GlcNAc...) asparagine). 7 EGF-like domains span residues 4171-4208 (DLPNPCLDLACEFLCLLNPSGATCVCPEGKYLINGTCN), 4213-4249 (LDDSCKLTCENGGRCILNEKGDLRCHCWPSYSGERCE), 4249-4285 (EVNHCSNYCQNGGTCVPSVLGRPTCSCALGFTGPNCG), 4285-4321 (GKTVCEDFCQNGGTCIVTAGNQPYCHCQPEYTGDRCQ), 4321-4357 (QYYVCHHYCVNSESCTIGDDGSVECVCPTRYEGPKCE), 4357-4392 (EVDKCVRCHGGHCIINKDSEDIFCNCTNGKIASSCQ), and 4390-4427 (SCQLCDGYCYNGGTCQLDPETNVPVCLCSTNWSGTQCE). Asn-4204 carries N-linked (GlcNAc...) asparagine glycosylation. 11 disulfides stabilise this stretch: Cys-4217-Cys-4227, Cys-4221-Cys-4237, Cys-4253-Cys-4263, Cys-4257-Cys-4273, Cys-4275-Cys-4284, Cys-4289-Cys-4299, Cys-4293-Cys-4309, Cys-4311-Cys-4320, Cys-4325-Cys-4335, Cys-4329-Cys-4345, and Cys-4347-Cys-4356. A glycan (N-linked (GlcNAc...) asparagine) is linked at Asn-4381. 3 disulfide bridges follow: Cys-4394-Cys-4404, Cys-4398-Cys-4415, and Cys-4417-Cys-4426. Asn-4420 carries an N-linked (GlcNAc...) asparagine glycan. A helical transmembrane segment spans residues 4445–4467 (AIIVPLVLLVTLITTLVIGLVLC). The Cytoplasmic segment spans residues 4468–4599 (KRKRRTKTIR…IEIGIRETVA (132 aa)). 2 short sequence motifs (endocytosis signal) span residues 4492 to 4495 (NPSY) and 4559 to 4562 (NPVY).

The protein belongs to the LDLR family. As to quaternary structure, binds LRPAP1, PLAU, PLAT and SERPINE1; binding is followed by internalization and degradation of the ligands. As to expression, expressed in thyroid gland and in salivary gland, as well as in adult and fetal brain.

The protein localises to the membrane. In terms of biological role, potential cell surface proteins that bind and internalize ligands in the process of receptor-mediated endocytosis. In Homo sapiens (Human), this protein is Low-density lipoprotein receptor-related protein 1B (LRP1B).